We begin with the raw amino-acid sequence, 423 residues long: MLVAAAVAPRQRLCVAFSGGADSTTLLHLLARLRPRFGFDLCAAHVHHALSPNADAWLDFCARQCAALDVAFHPFREQVARDHPAGLEAAAREVRHAALSRVTCDWLVFGHHQDDQAETLLFRLLRGAGVRGAAAMAAIEPGFPGRLRPLLGVRRADIRAFAQAASLEWIEDESNADPRHARNFLRHHVFPLFGEAFPGAVPALARASGHFREADGLLGDLAALDYAACGGSPWLRDRLLMLSDERVRNLLRWRIRQMGCEAPARARLVEAVRQLRATHAPLYLPLGTAACCTYRDRLWLEPQRDGAPEQPLPWRQEPALCWGAGVVRFEPVTGAGIGRGALQRAMDVALVPRWPGLMLRQDSGRPLRSFKNLCQEAGIPAWLRPRLPVLRVDGEAAWIGEIGVAAEFRCGPGEAGLLLVWQR.

18 to 23 provides a ligand contact to ATP; that stretch reads SGGADS.

It belongs to the tRNA(Ile)-lysidine synthase family.

Its subcellular location is the cytoplasm. The enzyme catalyses cytidine(34) in tRNA(Ile2) + L-lysine + ATP = lysidine(34) in tRNA(Ile2) + AMP + diphosphate + H(+). Functionally, ligates lysine onto the cytidine present at position 34 of the AUA codon-specific tRNA(Ile) that contains the anticodon CAU, in an ATP-dependent manner. Cytidine is converted to lysidine, thus changing the amino acid specificity of the tRNA from methionine to isoleucine. The sequence is that of tRNA(Ile)-lysidine synthase from Aromatoleum aromaticum (strain DSM 19018 / LMG 30748 / EbN1) (Azoarcus sp. (strain EbN1)).